We begin with the raw amino-acid sequence, 281 residues long: NAD kinase (281 aa).

The active-site Proton acceptor is Asp-61. NAD(+)-binding positions include 61–62 (DG), 134–135 (ND), Arg-145, Asp-164, 175–180 (TAYSLS), and Gln-234.

Belongs to the NAD kinase family. The cofactor is a divalent metal cation.

The protein localises to the cytoplasm. It carries out the reaction NAD(+) + ATP = ADP + NADP(+) + H(+). Its function is as follows. Involved in the regulation of the intracellular balance of NAD and NADP, and is a key enzyme in the biosynthesis of NADP. Catalyzes specifically the phosphorylation on 2'-hydroxyl of the adenosine moiety of NAD to yield NADP. The polypeptide is NAD kinase (Clostridium botulinum (strain Kyoto / Type A2)).